A 492-amino-acid polypeptide reads, in one-letter code: Spore germination protein XA (492 aa).

Transmembrane regions (helical) follow at residues 246–266, 285–305, 325–345, 353–373, 377–397, 413–433, and 442–462; these read FILL…FPFF, LLSL…VALV, EGIP…FELL, PAAF…QAAI, FVSP…FTLV, FLMS…LIVI, and GLPF…PSTF.

This sequence belongs to the GerABKA family.

It localises to the cell membrane. In terms of biological role, may allow B.anthracis to germinate within phagocytic cells and therefore involved in virulence. In Bacillus anthracis, this protein is Spore germination protein XA (gerXA).